The primary structure comprises 80 residues: Large ribosomal subunit protein eL13 (80 aa).

The protein belongs to the eukaryotic ribosomal protein eL13 family.

The polypeptide is Large ribosomal subunit protein eL13 (Aeropyrum pernix (strain ATCC 700893 / DSM 11879 / JCM 9820 / NBRC 100138 / K1)).